The following is a 106-amino-acid chain: Cytochrome c (106 aa).

Heme c is bound by residues C17, C20, and H21. N6,N6,N6-trimethyllysine is present on K75. Position 83 (M83) interacts with heme c.

The protein belongs to the cytochrome c family. In terms of processing, binds 1 heme c group covalently per subunit.

The protein localises to the mitochondrion intermembrane space. Electron carrier protein. The oxidized form of the cytochrome c heme group can accept an electron from the heme group of the cytochrome c1 subunit of cytochrome reductase. Cytochrome c then transfers this electron to the cytochrome oxidase complex, the final protein carrier in the mitochondrial electron-transport chain. The chain is Cytochrome c (CYC1) from Gibberella zeae (strain ATCC MYA-4620 / CBS 123657 / FGSC 9075 / NRRL 31084 / PH-1) (Wheat head blight fungus).